A 276-amino-acid polypeptide reads, in one-letter code: Lysosome-associated membrane glycoprotein 5 (276 aa).

Positions 1 to 27 are cleaved as a signal peptide; that stretch reads MDYRACTSALRMPVLLLLLCTFSCNLA. The Extracellular portion of the chain corresponds to 28–231; sequence EQEVENLSGL…PTDQRKQLEE (204 aa). Asn33, Asn51, and Asn100 each carry an N-linked (GlcNAc...) asparagine glycan. Residues 232–252 form a helical membrane-spanning segment; that stretch reads TLPLILGLTLGVAILIIVAVY. The Cytoplasmic portion of the chain corresponds to 253–276; that stretch reads HIHHKMTANQVQIPRDRSLYKHMG.

The protein belongs to the LAMP family. Glycosylated.

Its subcellular location is the cytoplasmic vesicle membrane. The protein localises to the cell membrane. It is found in the cell projection. It localises to the dendrite. The protein resides in the cytoplasmic vesicle. Its subcellular location is the secretory vesicle. The protein localises to the synaptic vesicle membrane. It is found in the growth cone membrane. It localises to the early endosome membrane. The protein resides in the recycling endosome. Its subcellular location is the endoplasmic reticulum-Golgi intermediate compartment membrane. The protein localises to the endosome membrane. Its function is as follows. Plays a role in short-term synaptic plasticity in a subset of GABAergic neurons in the brain. The chain is Lysosome-associated membrane glycoprotein 5 (lamp5) from Xenopus tropicalis (Western clawed frog).